A 1177-amino-acid chain; its full sequence is Chromosome partition protein Smc (1177 aa).

34-41 (ANGSGKSN) serves as a coordination point for ATP. The stretch at 167-506 (SGIAEYDSKK…IAAEAQREVR (340 aa)) forms a coiled coil. Residues 521 to 627 (GIYGTLAELI…VIVNSMEEAR (107 aa)) form the SMC hinge domain. A coiled-coil region spans residues 659-1012 (LAVDTTKLRE…NEIEKEKKNV (354 aa)).

Belongs to the SMC family. In terms of assembly, homodimer.

The protein resides in the cytoplasm. In terms of biological role, required for chromosome condensation and partitioning. Binds single-stranded but not double-stranded DNA. The protein is Chromosome partition protein Smc of Pyrococcus furiosus (strain ATCC 43587 / DSM 3638 / JCM 8422 / Vc1).